The following is a 702-amino-acid chain: Kinesin-like protein KIF3A (702 aa).

In terms of domain architecture, Kinesin motor spans 14 to 345; the sequence is NVKVVVRCRP…LRYANRAKNI (332 aa). 100 to 107 serves as a coordination point for ATP; that stretch reads GQTGTGKT. A coiled-coil region spans residues 355 to 593; it reads PKDALLRQFQ…LSRELRLQML (239 aa). 2 disordered regions span residues 372-424 and 667-702; these read KKLE…KMIE and LMKLERPRTSKGKARPKTGRRKRSAKPETVIDSLLQ. Acidic residues predominate over residues 376-400; it reads EGEEISGSDISGSEEDDDEEGEVGE. The span at 410–424 shows a compositional bias: basic and acidic residues; the sequence is DQAGKKKVSPDKMIE. Residues 600-702 form a globular region; the sequence is PRDYQEMIEN…PETVIDSLLQ (103 aa). The segment covering 675–690 has biased composition (basic residues); it reads TSKGKARPKTGRRKRS. Residue serine 690 is modified to Phosphoserine.

The protein belongs to the TRAFAC class myosin-kinesin ATPase superfamily. Kinesin family. Kinesin II subfamily. As to quaternary structure, heterodimer of KIF3A and KIF3B. Interacts with CIMAP3. Interacts with CLN3. Interacts with DCTN1. Interacts with FLCN. Interacts with AP3B1.

The protein resides in the cytoplasm. The protein localises to the cytoskeleton. Its subcellular location is the cell projection. It is found in the cilium. It localises to the microtubule organizing center. The protein resides in the centrosome. The protein localises to the centriole. Its function is as follows. Microtubule-based anterograde translocator for membranous organelles. Plus end-directed microtubule sliding activity in vitro. Plays a role in primary cilia formation. Plays a role in centriole cohesion and subdistal appendage organization and function. Regulates the formation of the subdistal appendage via recruitment of DCTN1 to the centriole. Also required for ciliary basal feet formation and microtubule anchoring to mother centriole. This chain is Kinesin-like protein KIF3A (KIF3A), found in Macaca fascicularis (Crab-eating macaque).